We begin with the raw amino-acid sequence, 205 residues long: Glycerol-3-phosphate acyltransferase (205 aa).

The Periplasmic portion of the chain corresponds to 1-3; that stretch reads MSA. Residues 4–24 traverse the membrane as a helical segment; the sequence is IAPGMILIAYLCGSISSAILV. Residues 25–52 lie on the Cytoplasmic side of the membrane; sequence CRLCGLPDPRTSGSGNPGATNVLRIGGK. A helical transmembrane segment spans residues 53–73; it reads GAAVAVLIFDVLKGMLPVWGA. Residues 74 to 80 lie on the Periplasmic side of the membrane; sequence YELGVSP. A helical transmembrane segment spans residues 81 to 101; it reads FWLGLIAIAACLGHIWPVFFG. Over 102–111 the chain is Cytoplasmic; the sequence is FKGGKGVATA. The chain crosses the membrane as a helical span at residues 112–132; the sequence is FGAIAPISWDLTGVMAGTWLL. Over 133 to 137 the chain is Periplasmic; that stretch reads TVLLS. Residues 138-158 form a helical membrane-spanning segment; the sequence is GYSSLGAIVSALIAPFYVWWF. The Cytoplasmic portion of the chain corresponds to 159–205; sequence KPQFTFPVSMLSCLILLRHHDNIQRLWRRQETKIWTKFKRKREKDPE.

Belongs to the PlsY family. In terms of assembly, probably interacts with PlsX.

It localises to the cell inner membrane. The enzyme catalyses sn-glycerol 3-phosphate + an acyl-CoA = a 1-acyl-sn-glycero-3-phosphate + CoA. It carries out the reaction a fatty acyl-[ACP] + sn-glycerol 3-phosphate = a 1-acyl-sn-glycero-3-phosphate + holo-[ACP]. Its pathway is lipid metabolism; phospholipid metabolism. Its function is as follows. Catalyzes the transfer of an acyl group from acyl-ACP to glycerol-3-phosphate (G3P) to form lysophosphatidic acid (LPA). This enzyme can also utilize acyl-CoA as fatty acyl donor, but not acyl-PO(4). The chain is Glycerol-3-phosphate acyltransferase from Shigella flexneri serotype 5b (strain 8401).